Reading from the N-terminus, the 439-residue chain is Skin secretory protein xP2 (439 aa).

An N-terminal signal peptide occupies residues 1–22; the sequence is MNHKLFCVHFLLLILSVCYIQG. A disordered region spans residues 25 to 351; that stretch reads AGGEPAPAEG…VEVGPKTEDC (327 aa). 5 tandem repeats follow at residues 26-33, 34-41, 42-51, 52-59, and 60-69. Residues 26-343 form a 33 X approximate repeats of G-G(0,1)-[EV](0,1)-A-P-[A-P](1,3)-A-E region; it reads GGEPAPAEGV…APAPAPAPVE (318 aa). Positions 26-345 are enriched in low complexity; the sequence is GGEPAPAEGV…APAPAPVEVG (320 aa). The stretch at 70–77 is one 6; approximate repeat; the sequence is GAEPAPAD. Tandem repeats lie at residues 78–87, 88–97, 98–107, 108–115, 116–125, 126–135, 136–145, 146–153, and 154–163. The 16; approximate repeat unit spans residues 164-173; sequence VEAPAPAPAE. 14 consecutive repeat copies span residues 174–183, 184–193, 194–203, 204–215, 216–225, 226–235, 236–245, 246–255, 256–265, 266–275, 276–285, 286–293, 294–303, and 304–313. One copy of the 31; approximate repeat lies at 314-321; that stretch reads GGAPSPAE. The 32; approximate repeat unit spans residues 322–331; sequence GGAPAAAPAE. One copy of the 33; approximate repeat lies at 332–343; the sequence is GGAPAPAPAPVE. P-type domains are found at residues 349–392 and 396–439; these read EDCK…FFPR and AQCL…FHQK. Cystine bridges form between Cys351–Cys377, Cys361–Cys376, Cys371–Cys388, Cys398–Cys424, Cys408–Cys423, and Cys418–Cys435.

Skin.

It is found in the secreted. Functionally, may act as a growth factor in the germinal layer of the epidermis. May also be involved in growth of regenerating glands and in protection of the skin from the external environment. The sequence is that of Skin secretory protein xP2 (p2) from Xenopus laevis (African clawed frog).